The primary structure comprises 146 residues: Keratin-associated protein 4-1 (146 aa).

18 consecutive repeat copies span residues 5–9 (CCGSV), 24–28 (CCRPS), 29–33 (CCQTT), 34–38 (CCCPS), 44–48 (CCRPS), 54–58 (CCQTT), 59–63 (CCRPS), 64–68 (CCHPV), 69–73 (CCQTT), 83–87 (CCRPL), 88–92 (CCQTT), 102–106 (CCRPL), 107–111 (CCQTT), 121–125 (CCRPL), 126–130 (CCQTT), 131–135 (CCRAT), 136–140 (CCRPS), and 141–145 (CCGSS). Residues 5–145 (CCGSVCSDQG…CCRPSCCGSS (141 aa)) are 18 X 5 AA repeats of C-C-[GRQC]-[SPT]-[VSTL].

It belongs to the KRTAP type 4 family. In terms of assembly, interacts with hair keratins. In terms of tissue distribution, expressed in the hair follicles.

In the hair cortex, hair keratin intermediate filaments are embedded in an interfilamentous matrix, consisting of hair keratin-associated proteins (KRTAP), which are essential for the formation of a rigid and resistant hair shaft through their extensive disulfide bond cross-linking with abundant cysteine residues of hair keratins. The matrix proteins include the high-sulfur and high-glycine-tyrosine keratins. In Homo sapiens (Human), this protein is Keratin-associated protein 4-1 (KRTAP4-1).